Here is a 178-residue protein sequence, read N- to C-terminus: Dual-action ribosomal maturation protein DarP (178 aa).

The segment covering 1-14 has biased composition (polar residues); sequence MTVSDHPQTVSQPD. Positions 1-25 are disordered; sequence MTVSDHPQTVSQPDPESESRPSKTR.

Belongs to the DarP family.

It is found in the cytoplasm. Its function is as follows. Member of a network of 50S ribosomal subunit biogenesis factors which assembles along the 30S-50S interface, preventing incorrect 23S rRNA structures from forming. Promotes peptidyl transferase center (PTC) maturation. This Nitrosomonas europaea (strain ATCC 19718 / CIP 103999 / KCTC 2705 / NBRC 14298) protein is Dual-action ribosomal maturation protein DarP.